Reading from the N-terminus, the 283-residue chain is MRCSAISPGSGTIINAISTGKGSAFGIDLKIKANVELKNDGKSKINGILLDNPSLKPNLVERCVKNVLEHFEVDYSAKISTSSELPLKSGLSSSSAASNAAVLATFGALGEKIDSELILDLAIKSSFEEQLTITGAYDDATASYFGGITVCNNLERKILKKDVFKEELDVIILMPNFKKNLNVKRMKLISDYVELAFEKCMNADYYKALFLNGILYSSALNFPSYISVDALEAGAVTAGLSGTGPSYIALSYQENTEKVKNAFKKYGTVIISKPDNFGSKIIY.

86–96 is an ATP binding site; that stretch reads PLKSGLSSSSA.

Belongs to the GHMP kinase family. Archaeal shikimate kinase subfamily.

It is found in the cytoplasm. It catalyses the reaction shikimate + ATP = 3-phosphoshikimate + ADP + H(+). It functions in the pathway metabolic intermediate biosynthesis; chorismate biosynthesis; chorismate from D-erythrose 4-phosphate and phosphoenolpyruvate: step 5/7. This chain is Shikimate kinase, found in Methanococcus vannielii (strain ATCC 35089 / DSM 1224 / JCM 13029 / OCM 148 / SB).